The primary structure comprises 655 residues: Fructose-1,6-bisphosphatase class 3 (655 aa).

Belongs to the FBPase class 3 family. The cofactor is Mn(2+).

The enzyme catalyses beta-D-fructose 1,6-bisphosphate + H2O = beta-D-fructose 6-phosphate + phosphate. The protein operates within carbohydrate biosynthesis; gluconeogenesis. The chain is Fructose-1,6-bisphosphatase class 3 from Porphyromonas gingivalis (strain ATCC BAA-308 / W83).